The following is a 291-amino-acid chain: Nucleotide-binding protein MSMEG_3079/MSMEI_3001 (291 aa).

14-21 (GLSGAGRG) lines the ATP pocket. 65 to 68 (DVRS) contacts GTP.

This sequence belongs to the RapZ-like family.

Displays ATPase and GTPase activities. This chain is Nucleotide-binding protein MSMEG_3079/MSMEI_3001, found in Mycolicibacterium smegmatis (strain ATCC 700084 / mc(2)155) (Mycobacterium smegmatis).